We begin with the raw amino-acid sequence, 84 residues long: Antimicrobial peptide MeuNaTxbeta-2 (84 aa).

The N-terminal stretch at 1–20 (MMKTVIVLIVFSLVMIVVKS) is a signal peptide. The LCN-type CS-alpha/beta domain occupies 21-83 (DNGYLLDKYT…LWHYETNRCR (63 aa)). 4 disulfides stabilise this stretch: Cys32–Cys82, Cys36–Cys57, Cys43–Cys64, and Cys47–Cys66.

Expressed by the venom gland.

It localises to the secreted. In terms of biological role, antimicrobial peptide with activity against both Gram-positive and -negative bacteria. The sequence is that of Antimicrobial peptide MeuNaTxbeta-2 from Mesobuthus eupeus (Lesser Asian scorpion).